Consider the following 117-residue polypeptide: Large ribosomal subunit protein bL20 (117 aa).

Belongs to the bacterial ribosomal protein bL20 family.

Functionally, binds directly to 23S ribosomal RNA and is necessary for the in vitro assembly process of the 50S ribosomal subunit. It is not involved in the protein synthesizing functions of that subunit. This is Large ribosomal subunit protein bL20 from Brachyspira hyodysenteriae (strain ATCC 49526 / WA1).